The following is an 89-amino-acid chain: Small ribosomal subunit protein uS15 (89 aa).

Belongs to the universal ribosomal protein uS15 family. Part of the 30S ribosomal subunit. Forms a bridge to the 50S subunit in the 70S ribosome, contacting the 23S rRNA.

One of the primary rRNA binding proteins, it binds directly to 16S rRNA where it helps nucleate assembly of the platform of the 30S subunit by binding and bridging several RNA helices of the 16S rRNA. In terms of biological role, forms an intersubunit bridge (bridge B4) with the 23S rRNA of the 50S subunit in the ribosome. This is Small ribosomal subunit protein uS15 from Renibacterium salmoninarum (strain ATCC 33209 / DSM 20767 / JCM 11484 / NBRC 15589 / NCIMB 2235).